A 174-amino-acid polypeptide reads, in one-letter code: Probable inosine/xanthosine triphosphatase (174 aa).

Asp-63 contacts Mg(2+).

The protein belongs to the YjjX NTPase family. Homodimer. It depends on Mg(2+) as a cofactor. The cofactor is Mn(2+).

The enzyme catalyses XTP + H2O = XDP + phosphate + H(+). It catalyses the reaction ITP + H2O = IDP + phosphate + H(+). In terms of biological role, phosphatase that hydrolyzes non-canonical purine nucleotides such as XTP and ITP to their respective diphosphate derivatives. Probably excludes non-canonical purines from DNA/RNA precursor pool, thus preventing their incorporation into DNA/RNA and avoiding chromosomal lesions. The chain is Probable inosine/xanthosine triphosphatase from Methanocella arvoryzae (strain DSM 22066 / NBRC 105507 / MRE50).